Consider the following 462-residue polypeptide: Glycine--tRNA ligase (462 aa).

Positions 100 and 174 each coordinate substrate. Residues 206–208 (RNE), 216–221 (FRTREF), 290–291 (EL), and 334–337 (GADR) each bind ATP. 221 to 225 (FEQME) serves as a coordination point for substrate. 330-334 (EPSLG) provides a ligand contact to substrate.

The protein belongs to the class-II aminoacyl-tRNA synthetase family. In terms of assembly, homodimer.

It localises to the cytoplasm. It carries out the reaction tRNA(Gly) + glycine + ATP = glycyl-tRNA(Gly) + AMP + diphosphate. In terms of biological role, catalyzes the attachment of glycine to tRNA(Gly). The polypeptide is Glycine--tRNA ligase (Acetivibrio thermocellus (strain ATCC 27405 / DSM 1237 / JCM 9322 / NBRC 103400 / NCIMB 10682 / NRRL B-4536 / VPI 7372) (Clostridium thermocellum)).